A 221-amino-acid polypeptide reads, in one-letter code: Glutathione S-transferase alpha-3 (221 aa).

In terms of domain architecture, GST N-terminal spans 3-83 (GKPVLHYFDG…YIATKYNLYG (81 aa)). Lys-4 bears the N6-succinyllysine mark. Glutathione contacts are provided by residues Tyr-9, Arg-45, 54–55 (QV), and 67–68 (QT). The 123-residue stretch at 85-207 (DMKERALIDM…LQPGSQRKPL (123 aa)) folds into the GST C-terminal domain.

Belongs to the GST superfamily. Alpha family. In terms of assembly, heterodimer of YC1 and YC2.

It is found in the cytoplasm. It catalyses the reaction RX + glutathione = an S-substituted glutathione + a halide anion + H(+). The enzyme catalyses androst-5-ene-3,17-dione = androst-4-ene-3,17-dione. It carries out the reaction pregn-5-ene-3,20-dione = progesterone. Its function is as follows. Conjugation of reduced glutathione to a wide number of exogenous and endogenous hydrophobic electrophiles. Catalyzes isomerization reactions that contribute to the biosynthesis of steroid hormones. Efficiently catalyze obligatory double-bond isomerizations of delta(5)-androstene-3,17-dione and delta(5)-pregnene-3,20-dione, precursors to testosterone and progesterone, respectively. Has substantial activity toward aflatoxin B1-8,9-epoxide. In Rattus norvegicus (Rat), this protein is Glutathione S-transferase alpha-3.